The primary structure comprises 264 residues: uncharacterized protein (264 aa).

The a divalent metal cation site is built by His-7, His-9, Glu-102, His-138, His-163, and Asp-213.

It belongs to the metallo-dependent hydrolases superfamily. TatD-type hydrolase family. A divalent metal cation serves as cofactor.

This is an uncharacterized protein from Buchnera aphidicola subsp. Acyrthosiphon pisum (strain APS) (Acyrthosiphon pisum symbiotic bacterium).